The following is a 390-amino-acid chain: Zinc finger CCCH domain-containing protein 46 (390 aa).

A C3H1-type zinc finger spans residues 2–29; it reads SRRQEICRNFQRGSCKYGAQCRYLHASP. Residues 27-129 are disordered; it reads ASPHQQQQQQ…AAHTSCEDPQ (103 aa). Low complexity predominate over residues 48–76; that stretch reads GSRQQQQPSFGSQFQQQQQQQQKPNPFGF. The span at 106-129 shows a compositional bias: polar residues; that stretch reads PTKQTEAVQPPQAQAAHTSCEDPQ. A required for transcriptional activation activity region spans residues 146–211; that stretch reads WKLTCYAHLR…FTNLLNSARP (66 aa). Over residues 230-248 the composition is skewed to polar residues; sequence SSFGASQTNGPPVFSSFSQ. Residues 230–284 form a disordered region; sequence SSFGASQTNGPPVFSSFSQIGAATNIGPGPGTTAPGMPASSPFGHPSSAPLAAPT. Low complexity predominate over residues 250 to 268; it reads GAATNIGPGPGTTAPGMPA.

In terms of assembly, interacts with GSK1 and GSK4. In terms of processing, phosphorylated on serine and threonine residues by GSK1. Phosphorylation represses nuclear localization. In terms of tissue distribution, expressed in the adaxial face of the collar, nodes and the basal region of elongating internodes.

It is found in the nucleus. The protein resides in the cytoplasm. Its function is as follows. Transcriptional activator that binds double-stranded DNA and the single-stranded RNA polymers poly(rA), poly(rU) and poly(rG), but not poly(rC). Mediates optimal plant architecture through brassinosteroid (BR) signaling. May act as a negative regulator in sterol homeostasis. Acts as a negative regulator of BR signaling. Binds to the specific DNA sequence 5'-CTCGC-3' of BZR1 promoter and negatively regulates BZR1. Acts as an antagonistic transcription factor of BZR1 to attenuate the BR signaling pathway and regulate leaf bending. Represses the expression of ILI1, and activates that of IBH1 to balance the regulation activity of BZR1. The protein is Zinc finger CCCH domain-containing protein 46 of Oryza sativa subsp. japonica (Rice).